Consider the following 236-residue polypeptide: MAKDTTGRMRVTVKSGGRMKLSSKLWLDRQLNDPYVAQAKRDGYRSRAAYKLTEIDDKYHFLKSGQAVVDLGAAPGGWSQVAAKRIGSANGRGKLIAIDLLEMGEIPGVTFAQLDFLDSAAPDKLREMLGGDGADVVMSDMAGNTTGHRKTDQLRIVGLVESAAQFASEVLKPGGIFVAKVFQSGADATLMNQLKRDFATVKHVKPAASRKDSSERYVLAMGFRGTQPAAQEPQEP.

S-adenosyl-L-methionine-binding residues include Gly76, Trp78, Asp99, Asp115, and Asp140. The active-site Proton acceptor is Lys180.

Belongs to the class I-like SAM-binding methyltransferase superfamily. RNA methyltransferase RlmE family.

The protein resides in the cytoplasm. The enzyme catalyses uridine(2552) in 23S rRNA + S-adenosyl-L-methionine = 2'-O-methyluridine(2552) in 23S rRNA + S-adenosyl-L-homocysteine + H(+). In terms of biological role, specifically methylates the uridine in position 2552 of 23S rRNA at the 2'-O position of the ribose in the fully assembled 50S ribosomal subunit. This chain is Ribosomal RNA large subunit methyltransferase E, found in Rhodopseudomonas palustris (strain HaA2).